A 596-amino-acid polypeptide reads, in one-letter code: Probable ABC transporter ECU01_0200/ECU01_1410 (596 aa).

3 helical membrane-spanning segments follow: residues 26–46 (ALMA…VMSI), 173–193 (LVPI…MLRI), and 289–309 (LSVL…LGGI). The ABC transmembrane type-1 domain maps to 39-318 (KWFDVMSIKR…IARDLGFWLT (280 aa)). Positions 361-593 (VEFDDVSFAY…RGMYWRMKTA (233 aa)) constitute an ABC transporter domain. ATP-binding positions include Y370 and 400-411 (GRPGSGKSTILR).

This sequence belongs to the ABC transporter superfamily. ABCB family. Heavy Metal importer (TC 3.A.1.210) subfamily.

It is found in the membrane. This chain is Probable ABC transporter ECU01_0200/ECU01_1410, found in Encephalitozoon cuniculi (strain GB-M1) (Microsporidian parasite).